A 422-amino-acid chain; its full sequence is ORC1-type DNA replication protein 13 (422 aa).

Residues 80 to 84, tyrosine 231, and arginine 243 each bind ATP; that span reads TGKTL.

It belongs to the CDC6/cdc18 family.

In terms of biological role, involved in regulation of DNA replication. This Haloarcula marismortui (strain ATCC 43049 / DSM 3752 / JCM 8966 / VKM B-1809) (Halobacterium marismortui) protein is ORC1-type DNA replication protein 13 (cdc6m).